The primary structure comprises 403 residues: Formin-like protein 21b (403 aa).

In terms of domain architecture, FH2 spans 1 to 380; it reads MELLFTATLL…KAAKEAEMEK (380 aa). Positions 373 to 403 are disordered; it reads AKEAEMEKTKKRVSLTNKKASGVGEEESCLI.

This sequence belongs to the formin-like family. Class-II subfamily.

The sequence is that of Formin-like protein 21b (FH21B) from Arabidopsis thaliana (Mouse-ear cress).